Reading from the N-terminus, the 118-residue chain is Large ribosomal subunit protein bL20 (118 aa).

Belongs to the bacterial ribosomal protein bL20 family.

Functionally, binds directly to 23S ribosomal RNA and is necessary for the in vitro assembly process of the 50S ribosomal subunit. It is not involved in the protein synthesizing functions of that subunit. The polypeptide is Large ribosomal subunit protein bL20 (Bacillus anthracis (strain CDC 684 / NRRL 3495)).